Here is a 203-residue protein sequence, read N- to C-terminus: Adenylyl-sulfate kinase (203 aa).

35-42 contributes to the ATP binding site; that stretch reads GLSGSGKS. Residue Ser-109 is the Phosphoserine intermediate of the active site.

It belongs to the APS kinase family.

It carries out the reaction adenosine 5'-phosphosulfate + ATP = 3'-phosphoadenylyl sulfate + ADP + H(+). It functions in the pathway sulfur metabolism; hydrogen sulfide biosynthesis; sulfite from sulfate: step 2/3. In terms of biological role, catalyzes the synthesis of activated sulfate. The polypeptide is Adenylyl-sulfate kinase (Geotalea daltonii (strain DSM 22248 / JCM 15807 / FRC-32) (Geobacter daltonii)).